A 142-amino-acid chain; its full sequence is Histone H2B (142 aa).

Basic and acidic residues predominate over residues 1-10; the sequence is MPPKPAEKKP. Residues 1–50 form a disordered region; it reads MPPKPAEKKPSSTAGKAPASSAGKAPAEAAKKTSKAPAKSGEKKKATKVR. 2 positions are modified to N6-acetyllysine; alternate: lysine 8 and lysine 9. Residues lysine 8 and lysine 9 each participate in a glycyl lysine isopeptide (Lys-Gly) (interchain with G-Cter in SUMO); alternate cross-link. Residues 11 to 28 are compositionally biased toward low complexity; the sequence is SSTAGKAPASSAGKAPAE. Lysine 24 is modified (N6-acetyllysine). Positions 40 to 50 are enriched in basic and acidic residues; it reads SGEKKKATKVR. A Glycyl lysine isopeptide (Lys-Gly) (interchain with G-Cter in ubiquitin) cross-link involves residue lysine 137.

Belongs to the histone H2B family. In terms of assembly, the nucleosome is a histone octamer containing two molecules each of H2A, H2B, H3 and H4 assembled in one H3-H4 heterotetramer and two H2A-H2B heterodimers. The octamer wraps approximately 147 bp of DNA. In terms of processing, monoubiquitinated by the UBC2-BRE1 complex to form H2BK123ub1. H2BK123ub1 gives a specific tag for epigenetic transcriptional activation and is also prerequisite for H3K4me and H3K79me formation. H2BK123ub1 also modulates the formation of double-strand breaks during meiosis and is a prerequisite for DNA-damage checkpoint activation. Post-translationally, acetylation of N-terminal lysines and particularly formation of H2BK11ac has a positive effect on transcription. Sumoylation to form H2BK6su or H2BK7su occurs preferentially near the telomeres and represses gene transcription.

The protein localises to the nucleus. It localises to the chromosome. Its function is as follows. Core component of nucleosome. Nucleosomes wrap and compact DNA into chromatin, limiting DNA accessibility to the cellular machineries which require DNA as a template. Histones thereby play a central role in transcription regulation, DNA repair, DNA replication and chromosomal stability. DNA accessibility is regulated via a complex set of post-translational modifications of histones, also called histone code, and nucleosome remodeling. The sequence is that of Histone H2B (HTB1) from Mycosarcoma maydis (Corn smut fungus).